The sequence spans 188 residues: dCTP deaminase (188 aa).

Residues 111–116 (KSTYAR), 135–137 (TLE), Q156, Y170, and Q180 each bind dCTP. The active-site Proton donor/acceptor is E137.

The protein belongs to the dCTP deaminase family. Homotrimer.

It carries out the reaction dCTP + H2O + H(+) = dUTP + NH4(+). Its pathway is pyrimidine metabolism; dUMP biosynthesis; dUMP from dCTP (dUTP route): step 1/2. Its function is as follows. Catalyzes the deamination of dCTP to dUTP. The chain is dCTP deaminase from Chromohalobacter salexigens (strain ATCC BAA-138 / DSM 3043 / CIP 106854 / NCIMB 13768 / 1H11).